The primary structure comprises 491 residues: ATP synthase subunit beta, chloroplastic (491 aa).

163-170 is a binding site for ATP; the sequence is GGAGVGKT.

The protein belongs to the ATPase alpha/beta chains family. F-type ATPases have 2 components, CF(1) - the catalytic core - and CF(0) - the membrane proton channel. CF(1) has five subunits: alpha(3), beta(3), gamma(1), delta(1), epsilon(1). CF(0) has four main subunits: a(1), b(1), b'(1) and c(9-12).

The protein resides in the plastid. It is found in the chloroplast thylakoid membrane. The catalysed reaction is ATP + H2O + 4 H(+)(in) = ADP + phosphate + 5 H(+)(out). In terms of biological role, produces ATP from ADP in the presence of a proton gradient across the membrane. The catalytic sites are hosted primarily by the beta subunits. This chain is ATP synthase subunit beta, chloroplastic, found in Nephroselmis olivacea (Green alga).